Reading from the N-terminus, the 291-residue chain is 4-hydroxy-tetrahydrodipicolinate synthase (291 aa).

Threonine 44 is a pyruvate binding site. The active-site Proton donor/acceptor is tyrosine 132. Lysine 160 (schiff-base intermediate with substrate) is an active-site residue. Residue isoleucine 202 participates in pyruvate binding.

It belongs to the DapA family. Homotetramer; dimer of dimers.

The protein localises to the cytoplasm. It catalyses the reaction L-aspartate 4-semialdehyde + pyruvate = (2S,4S)-4-hydroxy-2,3,4,5-tetrahydrodipicolinate + H2O + H(+). It participates in amino-acid biosynthesis; L-lysine biosynthesis via DAP pathway; (S)-tetrahydrodipicolinate from L-aspartate: step 3/4. In terms of biological role, catalyzes the condensation of (S)-aspartate-beta-semialdehyde [(S)-ASA] and pyruvate to 4-hydroxy-tetrahydrodipicolinate (HTPA). In Thermodesulfovibrio yellowstonii (strain ATCC 51303 / DSM 11347 / YP87), this protein is 4-hydroxy-tetrahydrodipicolinate synthase.